Here is a 460-residue protein sequence, read N- to C-terminus: Argininosuccinate lyase (460 aa).

This sequence belongs to the lyase 1 family. Argininosuccinate lyase subfamily.

The protein localises to the cytoplasm. The enzyme catalyses 2-(N(omega)-L-arginino)succinate = fumarate + L-arginine. Its pathway is amino-acid biosynthesis; L-arginine biosynthesis; L-arginine from L-ornithine and carbamoyl phosphate: step 3/3. This chain is Argininosuccinate lyase, found in Nitratidesulfovibrio vulgaris (strain ATCC 29579 / DSM 644 / CCUG 34227 / NCIMB 8303 / VKM B-1760 / Hildenborough) (Desulfovibrio vulgaris).